The following is a 382-amino-acid chain: Chorismate synthase (382 aa).

NADP(+) is bound by residues Arg-39 and Arg-45. FMN contacts are provided by residues 128–130 (RAS), 246–247 (QA), Ala-290, 305–309 (KPIAT), and Arg-331.

It belongs to the chorismate synthase family. As to quaternary structure, homotetramer. Requires FMNH2 as cofactor.

The catalysed reaction is 5-O-(1-carboxyvinyl)-3-phosphoshikimate = chorismate + phosphate. Its pathway is metabolic intermediate biosynthesis; chorismate biosynthesis; chorismate from D-erythrose 4-phosphate and phosphoenolpyruvate: step 7/7. Its function is as follows. Catalyzes the anti-1,4-elimination of the C-3 phosphate and the C-6 proR hydrogen from 5-enolpyruvylshikimate-3-phosphate (EPSP) to yield chorismate, which is the branch point compound that serves as the starting substrate for the three terminal pathways of aromatic amino acid biosynthesis. This reaction introduces a second double bond into the aromatic ring system. In Deinococcus geothermalis (strain DSM 11300 / CIP 105573 / AG-3a), this protein is Chorismate synthase.